The chain runs to 4579 residues: Sacsin (4579 aa).

The Ubiquitin-like domain maps to 9-84; the sequence is VPVTVLPGCV…FVNLQSKGLK (76 aa). The residue at position 943 (Lys-943) is an N6-acetyllysine. A phosphoserine mark is found at Ser-1779 and Ser-2511. Thr-2516 carries the post-translational modification Phosphothreonine. Ser-3435 carries the phosphoserine modification. Disordered regions lie at residues 4248-4273 and 4279-4298; these read PEESSQSRDSAPSTPTSPTEFLTPGL and LFSGRESHKTSSKHQSPKKL. Positions 4254–4267 are enriched in polar residues; the sequence is SRDSAPSTPTSPTE. The residue at position 4261 (Thr-4261) is a Phosphothreonine. At Ser-4264 the chain carries Phosphoserine. Positions 4288 to 4298 are enriched in basic residues; sequence TSSKHQSPKKL. The J domain maps to 4306-4393; sequence ILKEVTSVVE…ASRFQSDKYS (88 aa). The segment at 4405–4427 is disordered; sequence ATSHKSERQQQNKEKCPPSAGQT. Basic and acidic residues predominate over residues 4406–4420; sequence TSHKSERQQQNKEKC. The 117-residue stretch at 4451–4567 folds into the HEPN domain; that stretch reads LRQARANFSA…MRVMECTACI (117 aa).

As to expression, highly expressed in the central nervous system. Also found in skeletal muscle and at low levels in pancreas.

The protein resides in the cytoplasm. Co-chaperone which acts as a regulator of the Hsp70 chaperone machinery and may be involved in the processing of other ataxia-linked proteins. This is Sacsin (SACS) from Homo sapiens (Human).